The chain runs to 211 residues: Thymidylate kinase (211 aa).

10–17 (GVEGCGKT) lines the ATP pocket.

Belongs to the thymidylate kinase family.

It catalyses the reaction dTMP + ATP = dTDP + ADP. Phosphorylation of dTMP to form dTDP in both de novo and salvage pathways of dTTP synthesis. This Trichormus variabilis (strain ATCC 29413 / PCC 7937) (Anabaena variabilis) protein is Thymidylate kinase.